Here is a 751-residue protein sequence, read N- to C-terminus: Probable alpha-galactosidase C (751 aa).

Positions 1–27 are cleaved as a signal peptide; that stretch reads MFGSPKRAALAAASLLAVFGNGPSVMA. 9 N-linked (GlcNAc...) asparagine glycosylation sites follow: asparagine 49, asparagine 57, asparagine 162, asparagine 186, asparagine 194, asparagine 366, asparagine 433, asparagine 452, and asparagine 500. The active-site Nucleophile is the aspartate 510. Aspartate 572 acts as the Proton donor in catalysis. A glycan (N-linked (GlcNAc...) asparagine) is linked at asparagine 720.

This sequence belongs to the glycosyl hydrolase 36 family. As to quaternary structure, homotetramer. Mg(2+) serves as cofactor. The cofactor is NAD(+).

The protein localises to the secreted. It carries out the reaction Hydrolysis of terminal, non-reducing alpha-D-galactose residues in alpha-D-galactosides, including galactose oligosaccharides, galactomannans and galactolipids.. Functionally, hydrolyzes a variety of simple alpha-D-galactoside as well as more complex molecules such as oligosaccharides and polysaccharides. The sequence is that of Probable alpha-galactosidase C (aglC) from Aspergillus oryzae (strain ATCC 42149 / RIB 40) (Yellow koji mold).